The sequence spans 266 residues: Glutamate racemase (266 aa).

Residues 9 to 10 (DS) and 41 to 42 (YG) each bind substrate. Cys73 functions as the Proton donor/acceptor in the catalytic mechanism. Position 74–75 (74–75 (NS)) interacts with substrate. Cys183 (proton donor/acceptor) is an active-site residue. A substrate-binding site is contributed by 184 to 185 (TH).

Belongs to the aspartate/glutamate racemases family.

It carries out the reaction L-glutamate = D-glutamate. It participates in cell wall biogenesis; peptidoglycan biosynthesis. Provides the (R)-glutamate required for cell wall biosynthesis. The chain is Glutamate racemase from Shewanella loihica (strain ATCC BAA-1088 / PV-4).